The chain runs to 135 residues: Endocuticle structural glycoprotein SgAbd-2 (135 aa).

Gln1 bears the Pyrrolidone carboxylic acid mark. Thr11 and Thr100 each carry an O-linked (HexNAc...) threonine glycan. Residues 32-102 (DGSYAYSYQT…AEGAHLPTPP (71 aa)) form the Chitin-binding type R&amp;R domain.

Its function is as follows. Component of the abdominal endocuticle. The sequence is that of Endocuticle structural glycoprotein SgAbd-2 from Schistocerca gregaria (Desert locust).